Here is a 291-residue protein sequence, read N- to C-terminus: Small ribosomal subunit protein uS2 (291 aa).

A compositionally biased stretch (acidic residues) spans 238–247; that stretch reads DEESGDELDE. The interval 238–291 is disordered; sequence DEESGDELDESVSLHEEGREITDYENYTPPEEREYSVNDEGDVFDEDESLYEGR. Over residues 249 to 259 the composition is skewed to basic and acidic residues; the sequence is VSLHEEGREIT. The segment covering 274–291 has biased composition (acidic residues); sequence VNDEGDVFDEDESLYEGR.

The protein belongs to the universal ribosomal protein uS2 family.

The chain is Small ribosomal subunit protein uS2 (rpsB) from Treponema pallidum (strain Nichols).